Consider the following 104-residue polypeptide: Protein RnfH (104 aa).

This sequence belongs to the UPF0125 (RnfH) family.

The sequence is that of Protein RnfH from Pseudomonas syringae pv. syringae (strain B728a).